The primary structure comprises 294 residues: Holothin acyltransferase (294 aa).

The N-acetyltransferase domain occupies Trp17–Gln146.

The enzyme catalyses marinoloyl-CoA C + holothin = thiomarinol C + CoA. It carries out the reaction pseudomonoyl-CoA C + holothin = pseudomonic acid C--holothin + CoA. The protein operates within antibiotic biosynthesis. Its function is as follows. Acyltransferase that catalyzes the formation of pseudomonic acid C-holothin (PAC-holothin), a thiomarinol analog, from pseudomonoyl-CoA C (PAC-CoA) and holothin. Accepts linear CoA substrates of different lengths, including propionyl-, hexanoyl-, octanoyl-, oleoyl- and dodecanoyl-CoA, readily converting all into the corresponding acyl-holothin adducts. In vivo, is probably involved in the biosynthesis of thiomarinol, a naturally occurring double-headed antibiotic. This Pseudoalteromonas sp. (strain SANK 73390) protein is Holothin acyltransferase.